The sequence spans 451 residues: Glutamyl-tRNA reductase (451 aa).

Substrate is bound by residues T49–R52, S109, E114–Q116, and Q120. C50 (nucleophile) is an active-site residue. G190–G195 is an NADP(+) binding site.

The protein belongs to the glutamyl-tRNA reductase family. As to quaternary structure, homodimer.

The catalysed reaction is (S)-4-amino-5-oxopentanoate + tRNA(Glu) + NADP(+) = L-glutamyl-tRNA(Glu) + NADPH + H(+). It functions in the pathway porphyrin-containing compound metabolism; protoporphyrin-IX biosynthesis; 5-aminolevulinate from L-glutamyl-tRNA(Glu): step 1/2. Functionally, catalyzes the NADPH-dependent reduction of glutamyl-tRNA(Glu) to glutamate 1-semialdehyde (GSA). This is Glutamyl-tRNA reductase from Mycolicibacterium smegmatis (strain ATCC 700084 / mc(2)155) (Mycobacterium smegmatis).